The chain runs to 380 residues: Probable dual-specificity RNA methyltransferase RlmN (380 aa).

Catalysis depends on Glu-112, which acts as the Proton acceptor. One can recognise a Radical SAM core domain in the interval 118 to 358 (YPDRVTACLS…TTVRDTRGRE (241 aa)). Cysteines 125 and 363 form a disulfide. [4Fe-4S] cluster is bound by residues Cys-132, Cys-136, and Cys-139. Residues 187–188 (GE), Ser-221, 244–246 (SLH), and Asn-320 contribute to the S-adenosyl-L-methionine site. The active-site S-methylcysteine intermediate is the Cys-363.

Belongs to the radical SAM superfamily. RlmN family. Requires [4Fe-4S] cluster as cofactor.

It is found in the cytoplasm. It carries out the reaction adenosine(2503) in 23S rRNA + 2 reduced [2Fe-2S]-[ferredoxin] + 2 S-adenosyl-L-methionine = 2-methyladenosine(2503) in 23S rRNA + 5'-deoxyadenosine + L-methionine + 2 oxidized [2Fe-2S]-[ferredoxin] + S-adenosyl-L-homocysteine. The enzyme catalyses adenosine(37) in tRNA + 2 reduced [2Fe-2S]-[ferredoxin] + 2 S-adenosyl-L-methionine = 2-methyladenosine(37) in tRNA + 5'-deoxyadenosine + L-methionine + 2 oxidized [2Fe-2S]-[ferredoxin] + S-adenosyl-L-homocysteine. Functionally, specifically methylates position 2 of adenine 2503 in 23S rRNA and position 2 of adenine 37 in tRNAs. This chain is Probable dual-specificity RNA methyltransferase RlmN, found in Salinispora arenicola (strain CNS-205).